Reading from the N-terminus, the 248-residue chain is MTWRATVLTLFPEMFPGPLGVSLAGRALASGLWGLEARDIRDSATDRHRSVDDTPAGGGPGMVLRADVLAAAIDAVDAAADRPRLVMSPRGRPLTQARVAELAAGPGPLIVCGRFEGIDQRVIDARGLEEVSIGDYVLSGGEIAAMALIDACVRLLPGVMGKLESSTDESFSAGLLEYPQYTRPQTFEGRPIPEVLLSGDHGKVAAWRLGEAEALTRARRPDLWAARPAQTIRAKGESQKTPKNKTDG.

S-adenosyl-L-methionine is bound by residues Gly113 and 133 to 138 (IGDYVL). Positions 226 to 248 (ARPAQTIRAKGESQKTPKNKTDG) are disordered. A compositionally biased stretch (basic and acidic residues) spans 234 to 248 (AKGESQKTPKNKTDG).

This sequence belongs to the RNA methyltransferase TrmD family. In terms of assembly, homodimer.

The protein localises to the cytoplasm. The enzyme catalyses guanosine(37) in tRNA + S-adenosyl-L-methionine = N(1)-methylguanosine(37) in tRNA + S-adenosyl-L-homocysteine + H(+). In terms of biological role, specifically methylates guanosine-37 in various tRNAs. The protein is tRNA (guanine-N(1)-)-methyltransferase of Rhodopseudomonas palustris (strain ATCC BAA-98 / CGA009).